Reading from the N-terminus, the 967-residue chain is A disintegrin and metalloproteinase with thrombospondin motifs 1 (967 aa).

Disordered regions lie at residues 1 to 27 (MQRAVPEGFGRRKLGSDMGNAERAPGS) and 192 to 250 (GDVG…SIRK). The N-terminal stretch at 1-49 (MQRAVPEGFGRRKLGSDMGNAERAPGSRSFGPVPTLLLLAAALLAVSDA) is a signal peptide. Residues 50–252 (LGRPSEEDEE…TGTGSIRKKR (203 aa)) constitute a propeptide that is removed on maturation. Positions 196 to 203 (GTCGVVDD) match the Cysteine switch motif. Cys-198 is a Zn(2+) binding site. Residues 203–212 (DEPRPTGKAE) show a composition bias toward basic and acidic residues. The segment covering 213–226 (TEDEDEGTEGEDEG) has biased composition (acidic residues). The Peptidase M12B domain maps to 258–467 (RYVETMLVAD…GHGECLMDKP (210 aa)). Glu-261, Asp-344, and Asp-351 together coordinate Ca(2+). Cystine bridges form between Cys-333–Cys-385, Cys-362–Cys-367, Cys-379–Cys-462, and Cys-417–Cys-446. His-401 provides a ligand contact to Zn(2+). The active site involves Glu-402. His-405 and His-411 together coordinate Zn(2+). Positions 462 and 465 each coordinate Ca(2+). The 84-residue stretch at 476-559 (DLPGTSYDAN…DRKHFDTPFH (84 aa)) folds into the Disintegrin domain. Intrachain disulfides connect Cys-488/Cys-511, Cys-499/Cys-521, Cys-506/Cys-540, and Cys-534/Cys-545. N-linked (GlcNAc...) asparagine glycosylation occurs at Asn-547. The TSP type-1 1 domain occupies 559-614 (HGSWGMWGPWGDCSRTCGGGVQYTMRECDNPVPKNGGKYCEGKRVRYRSCNLEDCP). 3 cysteine pairs are disulfide-bonded: Cys-571–Cys-608, Cys-575–Cys-613, and Cys-586–Cys-598. N-linked (GlcNAc...) asparagine glycans are attached at residues Asn-720 and Asn-764. Positions 725-849 (KKISGSVTSA…YFVKKKKESF (125 aa)) are spacer. TSP type-1 domains are found at residues 854 to 905 (TFSA…RPCA) and 908 to 967 (PCPQ…AECS).

Zn(2+) is required as a cofactor. Post-translationally, the precursor is cleaved by a furin endopeptidase. Glycosylated. Can be O-fucosylated by POFUT2 on a serine or a threonine residue found within the consensus sequence C1-X(2)-(S/T)-C2-G of the TSP type-1 repeat domains where C1 and C2 are the first and second cysteine residue of the repeat, respectively. Fucosylated repeats can then be further glycosylated by the addition of a beta-1,3-glucose residue by the glucosyltransferase, B3GALTL. Fucosylation mediates the efficient secretion of ADAMTS family members. Can also be C-glycosylated with one or two mannose molecules on tryptophan residues within the consensus sequence W-X-X-W of the TPRs, and N-glycosylated. These other glycosylations can also facilitate secretion.

It is found in the secreted. The protein resides in the extracellular space. It localises to the extracellular matrix. Its function is as follows. Metalloprotease which cleaves aggrecan, a cartilage proteoglycan, at the '1938-Glu-|-Leu-1939' site (within the chondroitin sulfate attachment domain), and may be involved in its turnover. Also cleaves COMP. Has angiogenic inhibitor activity. May play a critical role in follicular rupture. The polypeptide is A disintegrin and metalloproteinase with thrombospondin motifs 1 (ADAMTS1) (Homo sapiens (Human)).